A 162-amino-acid polypeptide reads, in one-letter code: Large ribosomal subunit protein uL15 (162 aa).

The span at 1–13 shows a compositional bias: basic and acidic residues; the sequence is MNLNELRDNEGSR. A disordered region spans residues 1 to 39; it reads MNLNELRDNEGSRYRKKRLGRGIGSGKGKTSGRGVKGQK. Positions 21 to 35 are enriched in gly residues; the sequence is RGIGSGKGKTSGRGV.

The protein belongs to the universal ribosomal protein uL15 family. Part of the 50S ribosomal subunit.

Functionally, binds to the 23S rRNA. This chain is Large ribosomal subunit protein uL15, found in Gluconobacter oxydans (strain 621H) (Gluconobacter suboxydans).